Here is a 38-residue protein sequence, read N- to C-terminus: Defensin (38 aa).

3 disulfide bridges follow: C4–C26, C11–C34, and C15–C36.

It belongs to the invertebrate defensin family. Type 2 subfamily.

It is found in the secreted. Mediates the inducible antibacterial activity in larvae of A.cyanea. This Aeshna cyanea (Southern hawker dragonfly) protein is Defensin.